We begin with the raw amino-acid sequence, 674 residues long: Xaa-Pro aminopeptidase 2 (674 aa).

A signal peptide spans 1–22 (MAQAYWQCYPWLVLLCACAWSY). The N-linked (GlcNAc...) asparagine glycan is linked to asparagine 65. Residue arginine 116 coordinates substrate. Residues asparagine 278 and asparagine 293 are each glycosylated (N-linked (GlcNAc...) asparagine). Position 430 (histidine 430) interacts with substrate. Residues aspartate 450, aspartate 461, and histidine 524 each contribute to the Zn(2+) site. Histidine 524, histidine 533, and glutamate 555 together coordinate substrate. Residues glutamate 555 and glutamate 569 each coordinate Zn(2+). Residue alanine 650 is the site of GPI-anchor amidated alanine attachment. Residues 651-674 (SAPHTTSLASMWVASALAILSWSC) constitute a propeptide, removed in mature form.

It belongs to the peptidase M24B family. In terms of assembly, homotrimer. Requires Zn(2+) as cofactor. N-glycosylated. In terms of tissue distribution, expressed strongly in lung, liver and heart, and at lower levels in kidney, testis, brain, spleen and skeletal muscle.

Its subcellular location is the cell membrane. It carries out the reaction Release of any N-terminal amino acid, including proline, that is linked to proline, even from a dipeptide or tripeptide.. With respect to regulation, inhibited by the chelating agents 1,10-phenanthroline and EDTA. Inhibited by the thiol-containing compounds 2-mercaptoethanol and dithiothreitol. Also inhibited by apstatin, captopril and p-(ch1oromercuri)benzenesulfonic acid. Weakly inhibited by D,L-2-mercaptomethyl-3-guanidinoethylthiopropanoic acid and N-[l-(R,S)-carboxy-(2-phenylethyl)]-Ala-Ala-Phe-p-aminobenzoate. Inhibited by ramiprilat and enalaprilat, in a Mn(2+)-dependent manner. Metal ions have a complex substrate- and concentration-dependent effect on activity. Activity towards Arg-Pro-Pro and Gly-Pro-Hyp is stimulated by Mn(2+) ion concentrations of 10-100 uM and then inhibited at Mn(2+) concentrations of 1-2 mM. Mn(2+) concentrations in excess of 2 mM stimulate activity towards Gly-Pro-Hyp but inhibit activity towards Arg-Pro-Pro. Zn(2+) and Co(2+) ions also inhibit activity towards Arg-Pro-Pro at high concentrations. Activity towards bradykinin is inhibited by Mn(2+) concentrations in excess of 1 mM. Its function is as follows. Membrane-bound metalloprotease which catalyzes the removal of a penultimate prolyl residue from the N-termini of peptides, such as Arg-Pro-Pro. May play a role in the metabolism of the vasodilator bradykinin. This chain is Xaa-Pro aminopeptidase 2, found in Rattus norvegicus (Rat).